The following is a 517-amino-acid chain: Transmembrane protein 180 (517 aa).

Over 1–11 the chain is Extracellular; the sequence is MRLGGPWAWLL. The helical transmembrane segment at 12 to 43 threads the bilayer; that stretch reads GLPTAVVYGSLALFVSVLHNVFLLYYVDTFVS. Topologically, residues 44-55 are cytoplasmic; it reads VYKIDKAAFWVG. The helical transmembrane segment at 56 to 74 threads the bilayer; sequence ETVFLLWNSLNDPLFGWLS. Residues 75–100 are Extracellular-facing; sequence DRQFLSSQPRSGAGLSSRAVVLARVR. The helical transmembrane segment at 101 to 118 threads the bilayer; it reads ALGWHGPLLALSFLAFWV. At 119–126 the chain is on the cytoplasmic side; it reads PWAPAGLQ. A helical transmembrane segment spans residues 127 to 151; sequence FLLCLCLYDGFLTLVDLHHHALLAD. The Extracellular portion of the chain corresponds to 152–155; the sequence is LALS. Residues 156 to 179 traverse the membrane as a helical segment; that stretch reads AHDRTHLNFYCSLFSAAGSLSVFA. Residues 180–191 lie on the Cytoplasmic side of the membrane; sequence SYAFWNKEDFSS. The helical transmembrane segment at 192–223 threads the bilayer; that stretch reads FRAFCLALATGSGLGFVGAARLLRRRVEAAGR. At 224–264 the chain is on the extracellular side; sequence EPGCPAMAVNDGLCEEELLVGGEEAGSITLGQYLQQLARHR. Residues 265-292 traverse the membrane as a helical segment; the sequence is NFLWFVGMDLVQVFHCHFNSNFFPLFLE. Topologically, residues 293–305 are cytoplasmic; sequence HLLSDHISLSTGS. The chain crosses the membrane as a helical span at residues 306–325; the sequence is FLLGISYVAPHLNNLYFLPL. The Extracellular segment spans residues 326–330; the sequence is CRRWG. A helical transmembrane segment spans residues 331–350; sequence VYAVVRGLFLLKLGLSLLML. The Cytoplasmic segment spans residues 351–358; that stretch reads LAGPDHPG. Residues 359–393 form a helical membrane-spanning segment; the sequence is LLCLFIASNRVFTEGTCKLLTLVVTDLVDEDLVLN. Residues 394-402 lie on the Extracellular side of the membrane; the sequence is HRKQAASAL. The chain crosses the membrane as a helical span at residues 403 to 429; that stretch reads LFGMVALVTKPGQTFAPLLGTWLLCFY. The Cytoplasmic segment spans residues 430–466; it reads TGHDLFQQHPPAPVGSAQPWPEPPAPPPAQAPPLRQG. A helical membrane pass occupies residues 467–485; that stretch reads CFYLLVLVPIACALLQLFT. Residues 486–517 lie on the Extracellular side of the membrane; that stretch reads WSQFTLHGRRLHMVKAQRQSLSRAQTLDVKMV.

The protein localises to the cell membrane. The chain is Transmembrane protein 180 from Bos taurus (Bovine).